The chain runs to 835 residues: Outer membrane usher protein FasD (835 aa).

A signal peptide spans 1 to 21 (MNKYPPLLTMLIIGIGSNAVA). A disulfide bridge connects residues cysteine 810 and cysteine 834.

The protein belongs to the fimbrial export usher family.

The protein localises to the cell outer membrane. In terms of biological role, involved in the export and assembly of the 987P fimbriae subunits across the outer membrane. This chain is Outer membrane usher protein FasD (fasD), found in Escherichia coli.